Consider the following 1038-residue polypeptide: Bone morphogenetic protein receptor type-2 (1038 aa).

A signal peptide spans 1–26 (MTSSLHRPFRVPWLLWAVLLVSTTAA). Residues 27-150 (SQNQERLCAF…PPHSFNRDET (124 aa)) are Extracellular-facing. Disulfide bonds link cysteine 34-cysteine 66, cysteine 60-cysteine 84, cysteine 94-cysteine 117, cysteine 99-cysteine 116, and cysteine 118-cysteine 123. Asparagine 55 carries N-linked (GlcNAc...) asparagine glycosylation. A glycan (N-linked (GlcNAc...) asparagine) is linked at asparagine 110. An N-linked (GlcNAc...) asparagine glycan is attached at asparagine 126. A helical membrane pass occupies residues 151–171 (IIIALASVSVLAVLIVALCFG). The Cytoplasmic portion of the chain corresponds to 172-1038 (YRMLTGDRKQ…VSKDIGMNCL (867 aa)). Residues 203–504 (LKLLELIGRG…QCAEERMAEL (302 aa)) form the Protein kinase domain. Residues 209 to 217 (IGRGRYGAV), lysine 230, and 280 to 282 (EYY) each bind ATP. Aspartate 333 functions as the Proton acceptor in the catalytic mechanism. ATP contacts are provided by residues 337 to 338 (RN) and aspartate 351. A Phosphothreonine modification is found at threonine 379. Position 586 is a phosphoserine (serine 586). A disordered region spans residues 593–626 (QAQARIPSPETSVTSLSTNTTTTNTTGLTPSTGM). Over residues 603–626 (TSVTSLSTNTTTTNTTGLTPSTGM) the composition is skewed to low complexity. Phosphoserine occurs at positions 680 and 681. Residues 746 to 769 (PKQQNLPKRPTSLPLNTKNSTKEP) form a disordered region. Serine 843 carries the phosphoserine modification. The span at 872–896 (RREQQAGHDEGVLDRLVDRRERPLE) shows a compositional bias: basic and acidic residues. Residues 872 to 974 (RREQQAGHDE…SGSGEKIKRR (103 aa)) form a disordered region. 2 stretches are compositionally biased toward polar residues: residues 909–924 (PCSE…TSTA) and 937–964 (RPNS…QDGK).

Belongs to the protein kinase superfamily. TKL Ser/Thr protein kinase family. TGFB receptor subfamily. In terms of assembly, interacts with GDF5. Interacts with BMP4. Interacts with SCUBE3. Interacts with TSC22D1/TSC-22. Interacts with activin A/INHBA. Mg(2+) is required as a cofactor. The cofactor is Mn(2+).

It localises to the cell membrane. It carries out the reaction L-threonyl-[receptor-protein] + ATP = O-phospho-L-threonyl-[receptor-protein] + ADP + H(+). It catalyses the reaction L-seryl-[receptor-protein] + ATP = O-phospho-L-seryl-[receptor-protein] + ADP + H(+). On ligand binding, forms a receptor complex consisting of two type II and two type I transmembrane serine/threonine kinases. Type II receptors phosphorylate and activate type I receptors which autophosphorylate, then bind and activate SMAD transcriptional regulators. Can also mediate signaling through the activation of the p38MAPK cascade. Binds to BMP7, BMP2 and, less efficiently, BMP4. Binding is weak but enhanced by the presence of type I receptors for BMPs. Mediates induction of adipogenesis by GDF6. Promotes signaling also by binding to activin A/INHBA. The protein is Bone morphogenetic protein receptor type-2 (Bmpr2) of Mus musculus (Mouse).